Consider the following 1307-residue polypeptide: Histone-lysine N-methyltransferase SETDB1 (1307 aa).

Residues valine 30–glutamate 65 are a coiled coil. Phosphoserine is present on residues serine 112 and serine 117. Phosphothreonine is present on threonine 120. The interval aspartate 127–glutamine 148 is disordered. A Glycyl lysine isopeptide (Lys-Gly) (interchain with G-Cter in SUMO2); alternate cross-link involves residue lysine 182. Lysine 182 is covalently cross-linked (Glycyl lysine isopeptide (Lys-Gly) (interchain with G-Cter in ubiquitin); alternate). 2 Tudor domains span residues lysine 257–threonine 320 and leucine 347–threonine 403. Disordered stretches follow at residues serine 404–glycine 424, isoleucine 444–glutamate 512, and serine 531–glycine 570. The segment covering proline 454–serine 467 has biased composition (pro residues). Positions glutamate 476 to arginine 494 are enriched in polar residues. Low complexity predominate over residues proline 495–glutamate 512. Over residues alanine 539–proline 565 the composition is skewed to pro residues. Residues tyrosine 611–leucine 682 form the MBD domain. The 74-residue stretch at valine 744 to glycine 817 folds into the Pre-SET domain. Zn(2+) contacts are provided by cysteine 746, cysteine 748, cysteine 752, cysteine 758, cysteine 760, cysteine 798, cysteine 802, cysteine 804, and cysteine 809. Residues valine 820–asparagine 1282 enclose the SET domain. Residues lysine 830–tryptophan 832, aspartate 868, and tyrosine 870 contribute to the S-adenosyl-L-methionine site. Lysine 884 participates in a covalent cross-link: Glycyl lysine isopeptide (Lys-Gly) (interchain with G-Cter in ubiquitin). Positions glutamate 885–glutamine 1174 are disordered. Over residues glutamate 913–aspartate 924 the composition is skewed to acidic residues. The segment covering glycine 950–proline 966 has biased composition (basic and acidic residues). A Phosphoserine modification is found at serine 1042. Residues phenylalanine 1048–asparagine 1066 show a composition bias toward basic and acidic residues. Lysine 1049 is covalently cross-linked (Glycyl lysine isopeptide (Lys-Gly) (interchain with G-Cter in SUMO2); alternate). Residue lysine 1049 forms a Glycyl lysine isopeptide (Lys-Gly) (interchain with G-Cter in SUMO1); alternate linkage. Glycyl lysine isopeptide (Lys-Gly) (interchain with G-Cter in SUMO2) cross-links involve residues lysine 1055 and lysine 1085. Over residues serine 1097 to proline 1112 the composition is skewed to polar residues. Over residues leucine 1116–serine 1131 the composition is skewed to low complexity. Positions glycine 1137 to serine 1156 are enriched in polar residues. Residue lysine 1165 forms a Glycyl lysine isopeptide (Lys-Gly) (interchain with G-Cter in SUMO2) linkage. Residues lysine 1186 and lysine 1194 each carry the N6,N6,N6-trimethyllysine; alternate modification. Residues lysine 1186 and lysine 1194 each carry the N6,N6-dimethyllysine; alternate modification. S-adenosyl-L-methionine contacts are provided by residues arginine 1236 and asparagine 1239 to histidine 1240. Zn(2+) contacts are provided by cysteine 1242, cysteine 1295, cysteine 1297, and cysteine 1302. One can recognise a Post-SET domain in the interval lysine 1291 to leucine 1307.

Belongs to the class V-like SAM-binding methyltransferase superfamily. Histone-lysine methyltransferase family. Suvar3-9 subfamily. Part of a complex containing at least CDYL, REST, WIZ, SETDB1, EHMT1 and EHMT2. Forms a complex with ATRX, TRIM28 and ZNF274. Probably part of a corepressor complex containing ZNF304, TRIM28, SETDB1 and DNMT1. Interacts with TRIM28/TIF1B. Interacts with ATF7IP and ATF7IP2; the interaction with ATF7IP is required to stimulate histone methyltransferase activity and facilitate the conversion of dimethylated to trimethylated H3 'Lys-9'. Interacts with MBD1; interaction is abolished when MBD1 is sumoylated. Interacts with CBX1 and CBX5. Interacts with DNMT3A and DNMT3B. Interacts with SUMO2. Interacts with MPHOSPH8. Interacts with ERG. Interacts with HDAC1, HDAC2, SIN3A, SIN3B. Interacts with ATRX. Interacts with RESF1. Interacts with ZNF638. Interacts with TASOR. Interacts with ZNF263; recruited to the SIX3 promoter along with other proteins involved in chromatin modification and transcriptional corepression where it contributes to transcriptional repression. Interacts with PHF13; the interaction probably enhances SETDB1 chromatin-associated levels and activity. Interacts with VRK1. Post-translationally, degraded by the proteasome, shielded by interaction with ATF7IP. Monoubiquitinated at Lys-884 by E2 enzymes UBE2E family. The conjugated-Ub is protected from deubiquitination through the SET domain. Monoubiquitination at Lys-884 is required for catalytic activity and H3K9 methylation and endogenous retrovirus silencing. Ubiquitously expressed. Strong expression in liver and testis. Expressed in the brain, lungs, kidneys, uterus and seminal vesicles.

It localises to the nucleus. The protein localises to the chromosome. The enzyme catalyses N(6),N(6)-dimethyl-L-lysyl(9)-[histone H3] + S-adenosyl-L-methionine = N(6),N(6),N(6)-trimethyl-L-lysyl(9)-[histone H3] + S-adenosyl-L-homocysteine + H(+). Its function is as follows. Histone methyltransferase that specifically trimethylates 'Lys-9' of histone H3. H3 'Lys-9' trimethylation represents a specific tag for epigenetic transcriptional repression by recruiting HP1 (CBX1, CBX3 and/or CBX5) proteins to methylated histones. Mainly functions in euchromatin regions, thereby playing a central role in the silencing of euchromatic genes. H3 'Lys-9' trimethylation is coordinated with DNA methylation. Probably forms a complex with MBD1 and ATF7IP that represses transcription and couples DNA methylation and histone 'Lys-9' trimethylation. Its activity is dependent on MBD1 and is heritably maintained through DNA replication by being recruited by CAF-1. SETDB1 is targeted to histone H3 by TRIM28/TIF1B, a factor recruited by KRAB zinc-finger proteins. Probably forms a corepressor complex required for activated KRAS-mediated promoter hypermethylation and transcriptional silencing of tumor suppressor genes (TSGs) or other tumor-related genes in colorectal cancer (CRC) cells. Required to maintain a transcriptionally repressive state of genes in undifferentiated embryonic stem cells (ESCs). In ESCs, in collaboration with TRIM28, is also required for H3K9me3 and silencing of endogenous and introduced retroviruses in a DNA-methylation independent-pathway. Associates at promoter regions of tumor suppressor genes (TSGs) leading to their gene silencing. The SETDB1-TRIM28-ZNF274 complex may play a role in recruiting ATRX to the 3'-exons of zinc-finger coding genes with atypical chromatin signatures to establish or maintain/protect H3K9me3 at these transcriptionally active regions. This chain is Histone-lysine N-methyltransferase SETDB1, found in Mus musculus (Mouse).